Here is a 271-residue protein sequence, read N- to C-terminus: Ribosomal RNA small subunit methyltransferase A (271 aa).

H11, L13, G38, E59, D84, and N109 together coordinate S-adenosyl-L-methionine.

This sequence belongs to the class I-like SAM-binding methyltransferase superfamily. rRNA adenine N(6)-methyltransferase family. RsmA subfamily.

It localises to the cytoplasm. The enzyme catalyses adenosine(1518)/adenosine(1519) in 16S rRNA + 4 S-adenosyl-L-methionine = N(6)-dimethyladenosine(1518)/N(6)-dimethyladenosine(1519) in 16S rRNA + 4 S-adenosyl-L-homocysteine + 4 H(+). Its function is as follows. Specifically dimethylates two adjacent adenosines (A1518 and A1519) in the loop of a conserved hairpin near the 3'-end of 16S rRNA in the 30S particle. May play a critical role in biogenesis of 30S subunits. The protein is Ribosomal RNA small subunit methyltransferase A of Nostoc sp. (strain PCC 7120 / SAG 25.82 / UTEX 2576).